The primary structure comprises 1174 residues: Male determiner protein Mdmd(V) (1174 aa).

Residues 1 to 15 show a composition bias toward basic and acidic residues; that stretch reads MNATDAESRKPENKP. 3 disordered regions span residues 1–51, 79–110, and 136–259; these read MNAT…SGQR, RKDG…PVEL, and KQLS…LRRS. Over residues 16–35 the composition is skewed to low complexity; that stretch reads SSESSSSGSTSGSSDGEVSS. A compositionally biased stretch (polar residues) spans 36-47; sequence KTYFKNNKSKVL. A compositionally biased stretch (basic and acidic residues) spans 79-92; the sequence is RKDGSNEMLPKEDS. The segment covering 93-102 has biased composition (polar residues); it reads INTNHNYTTD. Positions 138 to 153 are enriched in low complexity; that stretch reads LSAYRSRSRSTRLSYS. The segment covering 167 to 180 has biased composition (basic residues); the sequence is SRYKKSVLRSRRTS. The span at 183-200 shows a compositional bias: basic and acidic residues; it reads HGRDSSTTKRSVSRDKDN. Residues 201 to 223 are compositionally biased toward basic residues; it reads RLRRRIGSSRSHTRSHSRFRRSE. Residues 235-259 show a composition bias toward basic and acidic residues; sequence RSQERRHERRRSMSSDYERIALRRS. The 184-residue stretch at 348 to 531 folds into the MIF4G domain; it reads KKYIHGYINK…KVLFQVRRDG (184 aa). The span at 597 to 608 shows a compositional bias: low complexity; it reads DSDGSFGSGSNS. Residues 597–616 are disordered; that stretch reads DSDGSFGSGSNSETALSDCD. The MI domain maps to 641–757; sequence ALRRTIYLTL…SWDVLDCIKL (117 aa). Residues 840-857 show a composition bias toward low complexity; sequence SAPSSSSSSSLSSELSAP. 2 disordered regions span residues 840–1045 and 1095–1133; these read SAPS…SRTK and RKDN…NHSR. A compositionally biased stretch (basic residues) spans 869-909; the sequence is KKKHKGKNKKMTKKKNPSKKKEKTKKIVGKNKIAAKNKTIK. Over residues 910 to 924 the composition is skewed to basic and acidic residues; the sequence is RRTDKDNSSSKDNFL. A compositionally biased stretch (low complexity) spans 926–957; it reads SESSSNESISLDSLSSELFAPSSYSSSESSND. A compositionally biased stretch (basic residues) spans 963–1001; the sequence is KHKGKNKKMTKKKNPSNKREKTKKKLSKNKKAPNKNTKK. A compositionally biased stretch (low complexity) spans 1010–1020; it reads SSESSISESKS. Basic residues predominate over residues 1034 to 1045; that stretch reads RKKRVTSKSRTK. The span at 1095–1118 shows a compositional bias: basic and acidic residues; the sequence is RKDNYGNRQNHEISQRHDSEIKRR. The span at 1119–1130 shows a compositional bias: basic residues; sequence REERKKRHHEKN.

Belongs to the CWC22 family. In terms of assembly, component of the spliceosome C complex.

The protein resides in the nucleus speckle. Male determiner protein (M-factor) that controls male somatic sexual differentiation. Acts as a dominant factor that regulates the mRNA splicing of transformer (tra) and doublesex (dsx) transcripts and promotes expression of male splice forms of tra and dsx. Probably acts as a component of the spliceosome C complex required for mRNA splicing factor and exon-junction complex (EJC) assembly. Hinders eIF4AIII from non-specifically binding RNA and escorts it to the splicing machinery to promote EJC assembly on mature mRNAs. This Musca domestica (House fly) protein is Male determiner protein Mdmd(V).